We begin with the raw amino-acid sequence, 888 residues long: Transmembrane channel-like protein 2 (888 aa).

The tract at residues methionine 1 to aspartate 128 is disordered. Over methionine 1 to glycine 228 the chain is Cytoplasmic. Basic and acidic residues-rich tracts occupy residues serine 7–alanine 16, aspartate 32–alanine 44, and arginine 87–lysine 110. Residues serine 117–aspartate 128 show a composition bias toward polar residues. A helical transmembrane segment spans residues serine 229–proline 266. Topologically, residues tyrosine 267–tyrosine 317 are extracellular. The chain crosses the membrane as a helical span at residues arginine 318–threonine 350. The Cytoplasmic segment spans residues serine 351–histidine 406. Residues leucine 407–serine 437 form a helical membrane-spanning segment. Over glutamine 438–serine 447 the chain is Extracellular. The chain crosses the membrane as a helical span at residues tryptophan 448 to leucine 475. Residues glutamate 476–histidine 479 are Cytoplasmic-facing. The chain crosses the membrane as a helical span at residues proline 480–leucine 514. The Extracellular portion of the chain corresponds to serine 515 to cysteine 556. A helical membrane pass occupies residues tryptophan 557 to methionine 594. Topologically, residues asparagine 595–aspartate 613 are cytoplasmic. Residues isoleucine 614 to tyrosine 634 traverse the membrane as a helical segment. Topologically, residues alanine 635–glycine 637 are extracellular. Residues leucine 638–serine 660 traverse the membrane as a helical segment. At asparagine 661–asparagine 674 the chain is on the cytoplasmic side. A helical transmembrane segment spans residues asparagine 675–serine 698. Topologically, residues leucine 699–glycine 741 are extracellular. The helical transmembrane segment at leucine 742–isoleucine 775 threads the bilayer. The Cytoplasmic portion of the chain corresponds to glutamine 776–asparagine 888. Positions leucine 813–asparagine 888 are disordered. Composition is skewed to polar residues over residues proline 836 to tryptophan 851 and glycine 866 to lysine 881.

Belongs to the TMC family. Forms the MET channel composed of TMC dimer (TMC1 or TMC2), TMIE, TOMT, CIB (CIB2 or CIB3), LHFPL5 and PDH15. The interaction of TMC1 and TMC2 with TOMT is required for the transportation of TMC1/2 into the stereocilia of hair cells. Interacts (via N-terminus) with both isoforms CD1 and CD3 of PCDH15. Can form a heterodimer with TMC1, TMC5 or TMC7. As to expression, inner ear and testis. Expressed in cochlear inner and outer hair cells and vestibular organ hair cells.

It localises to the cell membrane. It carries out the reaction Ca(2+)(in) = Ca(2+)(out). Functionally, pore-forming subunit of the mechanotransducer (MET) non-selective cation channel complex located at the tips of stereocilia of cochlear hair cells and that mediates sensory transduction in the auditory system. The MET complex is composed of two dimeric pore-forming ion-conducting transmembrane TMC (TMC1 or TMC2) subunits, several auxiliary proteins including LHFPL5, TMIE, CIB2/3 and TOMT, the tip-link PCDH15, and possibly the PIEZO subunits. MET channel is activated by tension in the tip-link extending from the side wall of one stereocilium to the tip of the adjacent shorter stereocilium, where the channel is located. TMC2 MET channel is highly permeable to calcium and likely transports monovalent cations. Also involved in vestibular hair cell transduction current of the mammalian inner ear. The sequence is that of Transmembrane channel-like protein 2 from Mus musculus (Mouse).